Consider the following 521-residue polypeptide: Bifunctional purine biosynthesis protein PurH (521 aa).

The MGS-like domain maps to 1–145 (MIKQALISVS…KNHRDVTVVV (145 aa)).

This sequence belongs to the PurH family.

The catalysed reaction is (6R)-10-formyltetrahydrofolate + 5-amino-1-(5-phospho-beta-D-ribosyl)imidazole-4-carboxamide = 5-formamido-1-(5-phospho-D-ribosyl)imidazole-4-carboxamide + (6S)-5,6,7,8-tetrahydrofolate. The enzyme catalyses IMP + H2O = 5-formamido-1-(5-phospho-D-ribosyl)imidazole-4-carboxamide. The protein operates within purine metabolism; IMP biosynthesis via de novo pathway; 5-formamido-1-(5-phospho-D-ribosyl)imidazole-4-carboxamide from 5-amino-1-(5-phospho-D-ribosyl)imidazole-4-carboxamide (10-formyl THF route): step 1/1. It functions in the pathway purine metabolism; IMP biosynthesis via de novo pathway; IMP from 5-formamido-1-(5-phospho-D-ribosyl)imidazole-4-carboxamide: step 1/1. This Paraburkholderia phymatum (strain DSM 17167 / CIP 108236 / LMG 21445 / STM815) (Burkholderia phymatum) protein is Bifunctional purine biosynthesis protein PurH.